A 306-amino-acid chain; its full sequence is Ribonuclease Z (306 aa).

The Zn(2+) site is built by His-63, His-65, Asp-67, His-68, His-141, Asp-211, and His-269. Asp-67 acts as the Proton acceptor in catalysis.

This sequence belongs to the RNase Z family. Homodimer. Zn(2+) is required as a cofactor.

The catalysed reaction is Endonucleolytic cleavage of RNA, removing extra 3' nucleotides from tRNA precursor, generating 3' termini of tRNAs. A 3'-hydroxy group is left at the tRNA terminus and a 5'-phosphoryl group is left at the trailer molecule.. Functionally, zinc phosphodiesterase, which displays some tRNA 3'-processing endonuclease activity. Probably involved in tRNA maturation, by removing a 3'-trailer from precursor tRNA. The protein is Ribonuclease Z of Macrococcus caseolyticus (strain JCSC5402) (Macrococcoides caseolyticum).